The chain runs to 284 residues: MLFHRILPQYKTAISTYLTPTHCRLYIANLVTSRRMTNIEAAKKLAAYRAVDENLPPHAKVIGIGSGSTVVYVAERIGQLPNKDDFVCISTGFQSKQLIIDNGLKLGQIEQHPSIDIAFDGADEVDPQLNLIKGGGACLFQEKLVASASDKLIIVADFRKQSKHLGQNWRQGVPIEVVPIAFTKLINDLKRLGAKSVDLRQGGKAKAGPVITDNNNFILDADFGIIEDPKSLHLQLKQLVGVVDTGLFTGITEKVYFGEESGEVTTWDGVVTGSTTEEVIAESK.

This sequence belongs to the ribose 5-phosphate isomerase family.

It localises to the cytoplasm. It catalyses the reaction aldehydo-D-ribose 5-phosphate = D-ribulose 5-phosphate. Its pathway is carbohydrate degradation; pentose phosphate pathway; D-ribose 5-phosphate from D-ribulose 5-phosphate (non-oxidative stage): step 1/1. This is Ribose-5-phosphate isomerase (RKI1) from Lodderomyces elongisporus (strain ATCC 11503 / CBS 2605 / JCM 1781 / NBRC 1676 / NRRL YB-4239) (Yeast).